The chain runs to 156 residues: Cyanate hydratase (156 aa).

Residues R96, E99, and S122 contribute to the active site.

The protein belongs to the cyanase family.

The enzyme catalyses cyanate + hydrogencarbonate + 3 H(+) = NH4(+) + 2 CO2. In terms of biological role, catalyzes the reaction of cyanate with bicarbonate to produce ammonia and carbon dioxide. In Burkholderia mallei (strain NCTC 10247), this protein is Cyanate hydratase.